The following is a 208-amino-acid chain: Heavy metal-associated isoprenylated plant protein 42 (208 aa).

The region spanning 6–70 (FPICILKMNL…AVAKLGQSPQ (65 aa)) is the HMA domain. Positions 93-116 (ATNKTQDKPSPPAPPVTATTPVET) are disordered. The residue at position 205 (cysteine 205) is a Cysteine methyl ester. A lipid anchor (S-farnesyl cysteine) is attached at cysteine 205. The propeptide at 206-208 (SIM) is removed in mature form.

This sequence belongs to the HIPP family.

In terms of biological role, probable heavy-metal-binding protein. This chain is Heavy metal-associated isoprenylated plant protein 42, found in Arabidopsis thaliana (Mouse-ear cress).